The sequence spans 121 residues: Large ribosomal subunit protein bL21 (121 aa).

This sequence belongs to the bacterial ribosomal protein bL21 family. Part of the 50S ribosomal subunit. Contacts protein L20.

Functionally, this protein binds to 23S rRNA in the presence of protein L20. This is Large ribosomal subunit protein bL21 from Synechococcus sp. (strain CC9605).